The primary structure comprises 206 residues: Thymidylate kinase (206 aa).

11 to 18 (GIDGAGKT) contributes to the ATP binding site.

The protein belongs to the thymidylate kinase family.

It catalyses the reaction dTMP + ATP = dTDP + ADP. Functionally, phosphorylation of dTMP to form dTDP in both de novo and salvage pathways of dTTP synthesis. This Burkholderia cenocepacia (strain ATCC BAA-245 / DSM 16553 / LMG 16656 / NCTC 13227 / J2315 / CF5610) (Burkholderia cepacia (strain J2315)) protein is Thymidylate kinase.